The primary structure comprises 534 residues: MATARVEYIAPWWVYWLHNLPHVDFSLQRESGDFNPKDPGYQQTLLFVALFIALCAAVNLLFVSGYLICLCCCKKEDETETKMTSSCCVTWTAAVSGLLCCAAVGIGFYGNSETNDGVYQLTYSLDNANHTLAGIDSLVSNTNAKMKEDLDQHLFRLNEIFAARGDYIQSLRFMQQMAGNIIQQLTSLPNWQGTSVNFSEIARNASIIEYYRWLSYLILFITDVVICLVTCLGLAKKSKCLLLTMLCCGLIALMLSWASLALETSSAVGTSDFCVAPDKFILNMTPDQITADVVHYYLYCSQSQRNPFQQALTVFQRSLTTMQIQIQGLLQFAVPLFPTAQKDLLGIQLLLNTSESNLHQITALLDCRGLHKDYLEALIGICYDGVEGLLYLSLFSLLAAVAFTAMVCAMPRAWKHLAARDRDYNDVDDEDPFNPQARRIAVHNPNRGQLRSFCSYSSSLGSQASLQPPAQTVSNAQAAEYMNQAALFGGNPRYENVPLIGRGSPPPTYSPTMRATYLSMNEESPNIYSNVFPA.

The Extracellular segment spans residues 1-44 (MATARVEYIAPWWVYWLHNLPHVDFSLQRESGDFNPKDPGYQQT). The chain crosses the membrane as a helical span at residues 45 to 65 (LLFVALFIALCAAVNLLFVSG). The Cytoplasmic portion of the chain corresponds to 66–87 (YLICLCCCKKEDETETKMTSSC). A helical membrane pass occupies residues 88-108 (CVTWTAAVSGLLCCAAVGIGF). At 109 to 213 (YGNSETNDGV…NASIIEYYRW (105 aa)) the chain is on the extracellular side. Ca(2+) contacts are provided by Glu113 and Asp116. Asn129 is a glycosylation site (N-linked (GlcNAc...) asparagine). The RGD motif lies at 164–166 (RGD). N-linked (GlcNAc...) asparagine glycosylation is found at Asn197 and Asn204. The chain crosses the membrane as a helical span at residues 214–234 (LSYLILFITDVVICLVTCLGL). Topologically, residues 235–240 (AKKSKC) are cytoplasmic. The helical transmembrane segment at 241 to 261 (LLLTMLCCGLIALMLSWASLA) threads the bilayer. The Extracellular segment spans residues 262–388 (LETSSAVGTS…IGICYDGVEG (127 aa)). Disulfide bonds link Cys274–Cys382 and Cys300–Cys367. The N-linked (GlcNAc...) asparagine glycan is linked to Asn352. The chain crosses the membrane as a helical span at residues 389 to 409 (LLYLSLFSLLAAVAFTAMVCA). Over 410 to 534 (MPRAWKHLAA…PNIYSNVFPA (125 aa)) the chain is Cytoplasmic.

This sequence belongs to the tweety family. Forms cis-homodimers in the presence of Ca(+2) and forms monomers and trans-dimers in the absence of Ca(2+).

It is found in the cell membrane. The catalysed reaction is chloride(in) = chloride(out). The enzyme catalyses L-glutamate(out) = L-glutamate(in). In terms of biological role, may act as a calcium-independent, swelling-dependent volume-regulated anion channel (VRAC-swell) which plays a pivotal role in the process of regulatory volume decrease (RVD) in the brain through the efflux of anions like chloride and organic osmolytes like glutamate. Probable large-conductance Ca(2+)-activated chloride channel. The polypeptide is Protein tweety homolog 2 (ttyh2) (Xenopus laevis (African clawed frog)).